The sequence spans 612 residues: Zinc metalloproteinase-disintegrin-like HV1 (612 aa).

Positions 1–20 (MIQVLLVTICLAVFPYQGSS) are cleaved as a signal peptide. Positions 21-188 (IILESGNVND…SIKEDSQSNL (168 aa)) are excised as a propeptide. Residues 200-396 (KYVKFFLVAD…NMPQCILKKP (197 aa)) form the Peptidase M12B domain. A glycan (N-linked (GlcNAc...) asparagine) is linked at Asn-219. Intrachain disulfides connect Cys-311–Cys-391, Cys-351–Cys-375, and Cys-353–Cys-358. Residue His-336 coordinates Zn(2+). The active site involves Glu-337. Residues His-340 and His-346 each coordinate Zn(2+). In terms of domain architecture, Disintegrin spans 404–489 (PPVCGNYFVE…AECTDRFQRN (86 aa)). Positions 406, 409, 411, 413, 416, and 419 each coordinate Ca(2+). 14 disulfide bridges follow: Cys-407–Cys-436, Cys-418–Cys-431, Cys-420–Cys-426, Cys-430–Cys-453, Cys-444–Cys-450, Cys-449–Cys-475, Cys-462–Cys-482, Cys-469–Cys-500, Cys-493–Cys-505, Cys-512–Cys-562, Cys-527–Cys-573, Cys-540–Cys-550, Cys-557–Cys-599, and Cys-593–Cys-605. A D/ECD-tripeptide motif is present at residues 468-470 (ECD). Asp-470, Met-471, Asp-473, Asp-484, and Arg-485 together coordinate Ca(2+). Residue Asn-502 is glycosylated (N-linked (GlcNAc...) asparagine). Asn-609 carries an N-linked (GlcNAc...) asparagine glycan.

It belongs to the venom metalloproteinase (M12B) family. P-III subfamily. P-IIIc sub-subfamily. In terms of assembly, homodimer; disulfide-linked. It depends on Zn(2+) as a cofactor. As to expression, expressed by the venom gland.

It is found in the secreted. Its activity is regulated as follows. Inhibited by EDTA and EGTA. In terms of biological role, snake venom zinc metalloproteinase-disintegrin-like that potently activates prothrombin (F2). Does not elicit any hemorrhagic response. Barely inhibits collagen-induced platelet aggregation. Hydrolyzes the alpha-chain of fibrin and fibrinogen (FGA), without affecting the Bbeta- and gamma-chains. Induces apoptosis in cultured vascular endothelial cells. The sequence is that of Zinc metalloproteinase-disintegrin-like HV1 from Protobothrops flavoviridis (Habu).